The following is a 159-amino-acid chain: Serine-protein kinase RsbW (159 aa).

This sequence belongs to the anti-sigma-factor family.

The enzyme catalyses L-seryl-[protein] + ATP = O-phospho-L-seryl-[protein] + ADP + H(+). It catalyses the reaction L-threonyl-[protein] + ATP = O-phospho-L-threonyl-[protein] + ADP + H(+). Negative regulator of sigma-B activity. Phosphorylates and inactivates its specific antagonist protein, RsbV. Upon phosphorylation of RsbV, RsbW is released and binds to sigma-B, thereby blocking its ability to form an RNA polymerase holoenzyme (E-sigma-B). The chain is Serine-protein kinase RsbW from Staphylococcus aureus (strain MRSA252).